Consider the following 610-residue polypeptide: DNA mismatch repair protein MutL (610 aa).

It belongs to the DNA mismatch repair MutL/HexB family.

In terms of biological role, this protein is involved in the repair of mismatches in DNA. It is required for dam-dependent methyl-directed DNA mismatch repair. May act as a 'molecular matchmaker', a protein that promotes the formation of a stable complex between two or more DNA-binding proteins in an ATP-dependent manner without itself being part of a final effector complex. This is DNA mismatch repair protein MutL from Rickettsia canadensis (strain McKiel).